The primary structure comprises 558 residues: Ribonuclease J (558 aa).

Zn(2+)-binding residues include His81, His83, Asp85, His86, His148, and Asp170. A substrate-binding site is contributed by 371–375 (HVSGH). His397 is a binding site for Zn(2+).

It belongs to the metallo-beta-lactamase superfamily. RNA-metabolizing metallo-beta-lactamase-like family. Bacterial RNase J subfamily. Homodimer. Zn(2+) serves as cofactor.

It localises to the cytoplasm. In terms of biological role, an RNase that has endonuclease and 5'-3' exonuclease activity. The 5'-exonuclease activity acts on 5'-monophosphate but not 5'-triphosphate ends. Endonuclease activity can cleave within 4 nucleotides of the 5'-end of a triphosphorylated RNA. Plays the major role in pre-23S rRNA maturation, and a minor role in processing of pre-5S and pre-16S rRNA. This is Ribonuclease J from Mycolicibacterium smegmatis (strain ATCC 700084 / mc(2)155) (Mycobacterium smegmatis).